A 641-amino-acid chain; its full sequence is MTTSSIRRQMKNIVNNYSEAEIKVREATSNDPWGPSSSLMTEIADLTYNVVAFSEIMSMVWKRLNDHGKNWRHVYKALTLLDYLIKTGSERVAQQCRENIFAIQTLKDFQYIDRDGKDQGINVREKSKQLVALLKDEERLKAERAQALKTKERMAQVATGMGSNQITFGRGSSQPNLSTSHSEQEYGKAGGSPASYHGSPEASLCPQHRTGAPLGQSEELQPLSQRHPFLPHLGLASRPNGDWSQPCLTCDRAARATSPRVSSELEQARPQTSGEEELQLQLALAMSREVAEQEERLRRGDDLRLQMALEESRRDTVKIPKKKEHGSLPQQTTLLDLMDALPSSGPAAQKAEPWGPSASTNQTNPWGGPAAPASTSDPWPSFGTKPAASIDPWGVPTGATVQSVPKNSDPWAASQQPASSAGKRASDAWGAVSTTKPVSVSGSFELFSNLNGTIKDDFSEFDNLRTSKKTAESVTSLPSQNNGTTSPDPFESQPLTVASSKPSSARKTPESFLGPNAALVNLDSLVTRPAPPAQSLNPFLAPGAPATSAPVNPFQVNQPQPLTLNQLRGSPVLGTSTSFGPGPGVESMAVASMTSAAPQPALGATGSSLTPLGPAMMNMVGSVGIPPSAAQATGTTNPFLL.

Residues Arg8, Lys11, Arg25, Asn30, Arg63, and His73 each contribute to the a 1,2-diacyl-sn-glycero-3-phospho-(1D-myo-inositol-4,5-bisphosphate) site. Residues 12–144 (NIVNNYSEAE…KDEERLKAER (133 aa)) form the ENTH domain. Phosphoserine occurs at positions 153 and 156. Polar residues predominate over residues 163–181 (SNQITFGRGSSQPNLSTSH). Disordered stretches follow at residues 163 to 214 (SNQI…GAPL) and 255 to 275 (RATS…TSGE). Arg170 carries the omega-N-methylarginine modification. Ser173, Ser192, and Ser195 each carry phosphoserine. The span at 259-273 (PRVSSELEQARPQTS) shows a compositional bias: polar residues. 2 UIM domains span residues 275–294 (EEEL…AEQE) and 300–319 (GDDL…TVKI). Residues 340-425 (ALPSSGPAAQ…QPASSAGKRA (86 aa)) form a disordered region. A run of 6 repeats spans residues 352–354 (EPW), 364–366 (NPW), 377–379 (DPW), 391–393 (DPW), 409–411 (DPW), and 427–429 (DAW). A 6 X 3 AA repeats of [DE]-P-W region spans residues 352-639 (EPWGPSASTN…AQATGTTNPF (288 aa)). The segment covering 408–421 (SDPWAASQQPASSA) has biased composition (low complexity). The interval 470–512 (TAESVTSLPSQNNGTTSPDPFESQPLTVASSKPSSARKTPESF) is disordered. Residues 472–506 (ESVTSLPSQNNGTTSPDPFESQPLTVASSKPSSAR) show a composition bias toward polar residues. Ser486 bears the Phosphoserine mark. At Thr508 the chain carries Phosphothreonine. 2 repeat units span residues 537–539 (NPF) and 552–554 (NPF). Residues 537–639 (NPFLAPGAPA…AQATGTTNPF (103 aa)) form a 3 X 3 AA repeats of N-P-F region. At Ser570 the chain carries Phosphoserine. Copy 3 of the repeat occupies 637-639 (NPF).

The protein belongs to the epsin family. Binds EPS15. Interacts with ITSN1. Binds AP-2 and clathrin. Interacts with UBQLN2. Ubiquitinated. In terms of tissue distribution, highest expression is found in brain. Detected at lower levels in lung and liver.

It localises to the cytoplasm. The protein resides in the cytoplasmic vesicle. The protein localises to the clathrin-coated vesicle. In terms of biological role, plays a role in the formation of clathrin-coated invaginations and endocytosis. The chain is Epsin-2 (EPN2) from Homo sapiens (Human).